The chain runs to 397 residues: Phosphoglycerate kinase (397 aa).

Residues Asp22 to Asn24, Arg37, His60 to Arg63, Arg119, and Arg152 each bind substrate. ATP-binding positions include Lys202, Glu324, and Gly354 to Thr357.

It belongs to the phosphoglycerate kinase family. In terms of assembly, monomer.

It localises to the cytoplasm. The enzyme catalyses (2R)-3-phosphoglycerate + ATP = (2R)-3-phospho-glyceroyl phosphate + ADP. It participates in carbohydrate degradation; glycolysis; pyruvate from D-glyceraldehyde 3-phosphate: step 2/5. The chain is Phosphoglycerate kinase from Rhizorhabdus wittichii (strain DSM 6014 / CCUG 31198 / JCM 15750 / NBRC 105917 / EY 4224 / RW1) (Sphingomonas wittichii).